The chain runs to 397 residues: Lipid-A-disaccharide synthase (397 aa).

The protein belongs to the LpxB family.

The enzyme catalyses a lipid X + a UDP-2-N,3-O-bis[(3R)-3-hydroxyacyl]-alpha-D-glucosamine = a lipid A disaccharide + UDP + H(+). Its pathway is bacterial outer membrane biogenesis; LPS lipid A biosynthesis. In terms of biological role, condensation of UDP-2,3-diacylglucosamine and 2,3-diacylglucosamine-1-phosphate to form lipid A disaccharide, a precursor of lipid A, a phosphorylated glycolipid that anchors the lipopolysaccharide to the outer membrane of the cell. The polypeptide is Lipid-A-disaccharide synthase (Mannheimia succiniciproducens (strain KCTC 0769BP / MBEL55E)).